We begin with the raw amino-acid sequence, 377 residues long: UPF0754 membrane protein LMOf2365_2257 (377 aa).

The next 2 membrane-spanning stretches (helical) occupy residues 1-21 (MSVL…GAMT) and 357-377 (YLGG…AMWI).

The protein belongs to the UPF0754 family.

It localises to the cell membrane. The polypeptide is UPF0754 membrane protein LMOf2365_2257 (Listeria monocytogenes serotype 4b (strain F2365)).